A 302-amino-acid chain; its full sequence is uncharacterized protein (302 aa).

An N-terminal signal peptide occupies residues 1–28 (MNKLTAQNLLKKSRFLKYSLLTSISVGA).

This is an uncharacterized protein from Rickettsia prowazekii (strain Madrid E).